The primary structure comprises 456 residues: Adenylosuccinate lyase (456 aa).

N(6)-(1,2-dicarboxyethyl)-AMP is bound by residues 15–16 (RY), 90–92 (NHD), and 122–123 (TS). His171 acts as the Proton donor/acceptor in catalysis. Gln247 lines the N(6)-(1,2-dicarboxyethyl)-AMP pocket. The active-site Proton donor/acceptor is the Ser295. N(6)-(1,2-dicarboxyethyl)-AMP is bound by residues Ser296, 301-303 (KVN), Asn309, Arg335, and 340-344 (STVLR).

This sequence belongs to the lyase 1 family. Adenylosuccinate lyase subfamily. In terms of assembly, homotetramer. Residues from neighboring subunits contribute catalytic and substrate-binding residues to each active site.

The enzyme catalyses N(6)-(1,2-dicarboxyethyl)-AMP = fumarate + AMP. The catalysed reaction is (2S)-2-[5-amino-1-(5-phospho-beta-D-ribosyl)imidazole-4-carboxamido]succinate = 5-amino-1-(5-phospho-beta-D-ribosyl)imidazole-4-carboxamide + fumarate. It functions in the pathway purine metabolism; AMP biosynthesis via de novo pathway; AMP from IMP: step 2/2. It participates in purine metabolism; IMP biosynthesis via de novo pathway; 5-amino-1-(5-phospho-D-ribosyl)imidazole-4-carboxamide from 5-amino-1-(5-phospho-D-ribosyl)imidazole-4-carboxylate: step 2/2. Functionally, catalyzes two reactions in de novo purine nucleotide biosynthesis. Catalyzes the breakdown of 5-aminoimidazole- (N-succinylocarboxamide) ribotide (SAICAR or 2-[5-amino-1-(5-phospho-beta-D-ribosyl)imidazole-4-carboxamido]succinate) to 5-aminoimidazole-4-carboxamide ribotide (AICAR or 5-amino-1-(5-phospho-beta-D-ribosyl)imidazole-4-carboxamide) and fumarate, and of adenylosuccinate (ADS or N(6)-(1,2-dicarboxyethyl)-AMP) to adenosine monophosphate (AMP) and fumarate. This is Adenylosuccinate lyase (purB) from Legionella pneumophila subsp. pneumophila (strain Philadelphia 1 / ATCC 33152 / DSM 7513).